A 359-amino-acid polypeptide reads, in one-letter code: Alanine racemase, biosynthetic (359 aa).

The active-site Proton acceptor; specific for D-alanine is the K34. K34 carries the post-translational modification N6-(pyridoxal phosphate)lysine. A substrate-binding site is contributed by R129. Y255 acts as the Proton acceptor; specific for L-alanine in catalysis. Substrate is bound at residue M303.

The protein belongs to the alanine racemase family. In terms of assembly, monomer but homodimer in the presence of the substrate. Pyridoxal 5'-phosphate serves as cofactor.

It catalyses the reaction L-alanine = D-alanine. Its pathway is amino-acid biosynthesis; D-alanine biosynthesis; D-alanine from L-alanine: step 1/1. It participates in cell wall biogenesis; peptidoglycan biosynthesis. Its function is as follows. Catalyzes the interconversion of L-alanine and D-alanine. This is Alanine racemase, biosynthetic (alr) from Shigella dysenteriae.